The primary structure comprises 123 residues: Protein Rev (123 aa).

Position 5 is a phosphoserine; by host CK2 (serine 5). The tract at residues 18–26 (IIKTLYQSN) is homomultimerization. Disordered regions lie at residues 24–50 (QSNP…ARQR) and 79–123 (EGLS…GTKE). Positions 34-50 (TRQARKNRRRRWRARQR) match the Nuclear localization signal and RNA-binding (RRE) motif. Basic residues predominate over residues 36–50 (QARKNRRRRWRARQR). The short motif at 73–84 (FQLPPLEGLSLD) is the Nuclear export signal and binding to XPO1 element. Serine 92 carries the post-translational modification Phosphoserine; by host. Low complexity predominate over residues 93–105 (GTQQPQGTETGVG).

It belongs to the HIV-1 REV protein family. In terms of assembly, homomultimer; when bound to the RRE. Multimeric assembly is essential for activity and may involve XPO1. Binds to human KPNB1, XPO1, TNPO1, RANBP5 and IPO7. Interacts with the viral Integrase. Interacts with human KHDRBS1. Interacts with human NAP1; this interaction decreases Rev multimerization and stimulates its activity. Interacts with human DEAD-box helicases DDX3 and DDX24; these interactions may serve for viral RNA export to the cytoplasm and packaging, respectively. Interacts with human PSIP1; this interaction may inhibit HIV-1 DNA integration by promoting dissociation of the Integrase-LEDGF/p75 complex. Post-translationally, asymmetrically arginine dimethylated at one site by host PRMT6. Methylation impairs the RNA-binding activity and export of viral RNA from the nucleus to the cytoplasm. In terms of processing, phosphorylated by protein kinase CK2. Presence of, and maybe binding to the N-terminus of the regulatory beta subunit of CK2 is necessary for CK2-mediated Rev's phosphorylation.

It is found in the host nucleus. The protein resides in the host nucleolus. Its subcellular location is the host cytoplasm. Functionally, escorts unspliced or incompletely spliced viral pre-mRNAs (late transcripts) out of the nucleus of infected cells. These pre-mRNAs carry a recognition sequence called Rev responsive element (RRE) located in the env gene, that is not present in fully spliced viral mRNAs (early transcripts). This function is essential since most viral proteins are translated from unspliced or partially spliced pre-mRNAs which cannot exit the nucleus by the pathway used by fully processed cellular mRNAs. Rev itself is translated from a fully spliced mRNA that readily exits the nucleus. Rev's nuclear localization signal (NLS) binds directly to KPNB1/Importin beta-1 without previous binding to KPNA1/Importin alpha-1. KPNB1 binds to the GDP bound form of RAN (Ran-GDP) and targets Rev to the nucleus. In the nucleus, the conversion from Ran-GDP to Ran-GTP dissociates Rev from KPNB1 and allows Rev's binding to the RRE in viral pre-mRNAs. Rev multimerization on the RRE via cooperative assembly exposes its nuclear export signal (NES) to the surface. Rev can then form a complex with XPO1/CRM1 and Ran-GTP, leading to nuclear export of the complex. Conversion from Ran-GTP to Ran-GDP mediates dissociation of the Rev/RRE/XPO1/RAN complex, so that Rev can return to the nucleus for a subsequent round of export. Beside KPNB1, also seems to interact with TNPO1/Transportin-1, RANBP5/IPO5 and IPO7/RANBP7 for nuclear import. The nucleoporin-like HRB/RIP is an essential cofactor that probably indirectly interacts with Rev to release HIV RNAs from the perinuclear region to the cytoplasm. The protein is Protein Rev of Human immunodeficiency virus type 1 group M subtype G (isolate 92NG083) (HIV-1).